The sequence spans 660 residues: Oligopeptide-binding protein AliA (660 aa).

The first 22 residues, 1-22 (MKSSKLFALAGVTLLAATTLAA), serve as a signal peptide directing secretion. The N-palmitoyl cysteine moiety is linked to residue Cys23. Cys23 carries S-diacylglycerol cysteine lipidation. The tract at residues 638-660 (EKWMKEKEESNKKAQEDLAKHVK) is disordered.

This sequence belongs to the bacterial solute-binding protein 5 family.

It localises to the cell membrane. In terms of biological role, part of the binding-protein-dependent transport system for oligopeptides; probably an oligopeptide binding protein. This is Oligopeptide-binding protein AliA (aliA) from Streptococcus pneumoniae serotype 4 (strain ATCC BAA-334 / TIGR4).